Here is a 115-residue protein sequence, read N- to C-terminus: Type 3 secretion system chaperone PscG (115 aa).

Belongs to the YscG family. Forms a stable heterotrimeric complex with PscE and PscF/SctF in the cytoplasm. Co-stabilized by PscE.

The protein localises to the cytoplasm. Functionally, chaperone of the type III secretion system (T3SS), also called injectisome, which is used to inject bacterial effector proteins into eukaryotic host cells, facilitating the establishment and dissemination of infection. Along with PscE, prevents premature polymerization of the PscF/SctF needle protein within the cytoplasm. Required for type III secretion needle assembly. Also required for cytotoxicity by influencing PscF/SctF levels. The sequence is that of Type 3 secretion system chaperone PscG (pscG) from Pseudomonas aeruginosa (strain ATCC 15692 / DSM 22644 / CIP 104116 / JCM 14847 / LMG 12228 / 1C / PRS 101 / PAO1).